The sequence spans 91 residues: Small ribosomal subunit protein uS19 (91 aa).

It belongs to the universal ribosomal protein uS19 family.

In terms of biological role, protein S19 forms a complex with S13 that binds strongly to the 16S ribosomal RNA. The polypeptide is Small ribosomal subunit protein uS19 (Aromatoleum aromaticum (strain DSM 19018 / LMG 30748 / EbN1) (Azoarcus sp. (strain EbN1))).